A 320-amino-acid chain; its full sequence is Phosphate acyltransferase (320 aa).

Belongs to the PlsX family. Homodimer. Probably interacts with PlsY.

It is found in the cytoplasm. It catalyses the reaction a fatty acyl-[ACP] + phosphate = an acyl phosphate + holo-[ACP]. The protein operates within lipid metabolism; phospholipid metabolism. Functionally, catalyzes the reversible formation of acyl-phosphate (acyl-PO(4)) from acyl-[acyl-carrier-protein] (acyl-ACP). This enzyme utilizes acyl-ACP as fatty acyl donor, but not acyl-CoA. The protein is Phosphate acyltransferase of Chlamydia pneumoniae (Chlamydophila pneumoniae).